Here is a 185-residue protein sequence, read N- to C-terminus: Elongation factor P (185 aa).

Belongs to the elongation factor P family.

It localises to the cytoplasm. The protein operates within protein biosynthesis; polypeptide chain elongation. Functionally, involved in peptide bond synthesis. Stimulates efficient translation and peptide-bond synthesis on native or reconstituted 70S ribosomes in vitro. Probably functions indirectly by altering the affinity of the ribosome for aminoacyl-tRNA, thus increasing their reactivity as acceptors for peptidyl transferase. This is Elongation factor P from Microcystis aeruginosa (strain NIES-843 / IAM M-2473).